Here is a 221-residue protein sequence, read N- to C-terminus: Iron-sulfur cluster assembly SufBD family protein ycf24 (221 aa).

The protein belongs to the iron-sulfur cluster assembly SufBD family.

It is found in the plastid. The protein resides in the chloroplast. This Galdieria sulphuraria (Red alga) protein is Iron-sulfur cluster assembly SufBD family protein ycf24 (ycf24).